The chain runs to 156 residues: Small ribosomal subunit protein uS7 (156 aa).

The protein belongs to the universal ribosomal protein uS7 family. Part of the 30S ribosomal subunit. Contacts proteins S9 and S11.

Its function is as follows. One of the primary rRNA binding proteins, it binds directly to 16S rRNA where it nucleates assembly of the head domain of the 30S subunit. Is located at the subunit interface close to the decoding center, probably blocks exit of the E-site tRNA. The chain is Small ribosomal subunit protein uS7 from Dinoroseobacter shibae (strain DSM 16493 / NCIMB 14021 / DFL 12).